Here is a 397-residue protein sequence, read N- to C-terminus: Elongation factor Tu (397 aa).

One can recognise a tr-type G domain in the interval 10-207 (LPHVNVGTIG…TLDAYIPEPV (198 aa)). The G1 stretch occupies residues 19–26 (GHVDHGKT). 19–26 (GHVDHGKT) lines the GTP pocket. Residue Thr-26 coordinates Mg(2+). Positions 60–64 (GITIN) are G2. The segment at 81 to 84 (DCPG) is G3. GTP-binding positions include 81–85 (DCPGH) and 136–139 (NKAD). Positions 136 to 139 (NKAD) are G4. Positions 174-176 (SAR) are G5.

The protein belongs to the TRAFAC class translation factor GTPase superfamily. Classic translation factor GTPase family. EF-Tu/EF-1A subfamily. Monomer.

The protein resides in the cytoplasm. The enzyme catalyses GTP + H2O = GDP + phosphate + H(+). Its function is as follows. GTP hydrolase that promotes the GTP-dependent binding of aminoacyl-tRNA to the A-site of ribosomes during protein biosynthesis. The protein is Elongation factor Tu of Pseudomonas entomophila (strain L48).